We begin with the raw amino-acid sequence, 93 residues long: uncharacterized protein (93 aa).

A coiled-coil region spans residues 36–69; that stretch reads SEERLLSRLFEEMDELREAVEKEDWENLRDELLD.

This is an uncharacterized protein from Archaeoglobus fulgidus (strain ATCC 49558 / DSM 4304 / JCM 9628 / NBRC 100126 / VC-16).